The sequence spans 221 residues: Esterase C25G4.2 (221 aa).

Catalysis depends on charge relay system residues serine 106, aspartate 166, and histidine 194.

This sequence belongs to the LovG family.

The polypeptide is Esterase C25G4.2 (Caenorhabditis elegans).